The primary structure comprises 376 residues: Probable dual-specificity RNA methyltransferase RlmN (376 aa).

The segment at 1–25 (MSDSERTSLPLVFDEPRGRKKPPRH) is disordered. Glu-113 functions as the Proton acceptor in the catalytic mechanism. Positions 119–362 (YPDRATMCVS…PTTVRDTRGR (244 aa)) constitute a Radical SAM core domain. A disulfide bridge connects residues Cys-126 and Cys-368. Cys-133, Cys-137, and Cys-140 together coordinate [4Fe-4S] cluster. S-adenosyl-L-methionine is bound by residues 188-189 (GE), Ser-222, 245-247 (SLH), and Asn-325. Cys-368 (S-methylcysteine intermediate) is an active-site residue.

It belongs to the radical SAM superfamily. RlmN family. Requires [4Fe-4S] cluster as cofactor.

It localises to the cytoplasm. The catalysed reaction is adenosine(2503) in 23S rRNA + 2 reduced [2Fe-2S]-[ferredoxin] + 2 S-adenosyl-L-methionine = 2-methyladenosine(2503) in 23S rRNA + 5'-deoxyadenosine + L-methionine + 2 oxidized [2Fe-2S]-[ferredoxin] + S-adenosyl-L-homocysteine. It catalyses the reaction adenosine(37) in tRNA + 2 reduced [2Fe-2S]-[ferredoxin] + 2 S-adenosyl-L-methionine = 2-methyladenosine(37) in tRNA + 5'-deoxyadenosine + L-methionine + 2 oxidized [2Fe-2S]-[ferredoxin] + S-adenosyl-L-homocysteine. Its function is as follows. Specifically methylates position 2 of adenine 2503 in 23S rRNA and position 2 of adenine 37 in tRNAs. This Nocardioides sp. (strain ATCC BAA-499 / JS614) protein is Probable dual-specificity RNA methyltransferase RlmN.